We begin with the raw amino-acid sequence, 785 residues long: Mitochondrial intermediate peptidase (785 aa).

Residues 1–26 (MLKVTTSRPWVCSRCVRRQVQSRRRL) constitute a mitochondrion transit peptide. The interval 26–51 (LATASTQYRESRPVPVDNSAPGAKRD) is disordered. His-566 contributes to the Zn(2+) binding site. The active site involves Glu-567. Residues His-570 and His-573 each coordinate Zn(2+).

The protein belongs to the peptidase M3 family. It depends on Zn(2+) as a cofactor.

The protein resides in the mitochondrion matrix. The enzyme catalyses Release of an N-terminal octapeptide as second stage of processing of some proteins imported into the mitochondrion.. Functionally, cleaves proteins, imported into the mitochondrion, to their mature size. While most mitochondrial precursor proteins are processed to the mature form in one step by mitochondrial processing peptidase (MPP), the sequential cleavage by MIP of an octapeptide after initial processing by MPP is a required step for a subgroup of nuclear-encoded precursor proteins destined for the matrix or the inner membrane. The protein is Mitochondrial intermediate peptidase (oct1) of Botryotinia fuckeliana (strain B05.10) (Noble rot fungus).